Here is a 575-residue protein sequence, read N- to C-terminus: Bifunctional decalin synthase calF (575 aa).

The signal sequence occupies residues 1-18 (MSFKPLLLSLSLLSPALG). 9 N-linked (GlcNAc...) asparagine glycosylation sites follow: asparagine 46, asparagine 103, asparagine 127, asparagine 175, asparagine 268, asparagine 308, asparagine 359, asparagine 425, and asparagine 485. Residues 118-297 (LGNYASYSIN…LSMTTKVFQD (180 aa)) enclose the FAD-binding PCMH-type domain.

This sequence belongs to the oxygen-dependent FAD-linked oxidoreductase family.

The protein operates within secondary metabolite biosynthesis. Bifunctional decaline synthase; part of the gene cluster that mediates the biosynthesis of calbistrin A and related compounds. Calbistrin A is a secondary metabolite with an interesting structure that was recently found to have bioactivity against leukemia cells. It consists of two polyketides linked by an ester bond: a bicyclic decalin containing polyketide and a linear 12 carbon dioic acid structure. The polyketide synthase calA is probably responsible for forming the decalin moiety. Because calA lacks a designated enoylreductase (ER) domain, the required activity is provided by the trans-enoyl reductase calK. Following release from the PKS, calF then probably catalyzes the oxidation and the subsequent Diels Alder cycloisomerization that lead to the formation of the decalin moiety. The decalin polyketide backbone includes two C-methyl groups, at C7 and C11 in backbone, of which the C7 position is probably methylated by the methyltransferase domain of calA. A candidate for adding the methyl group at C11, if not done by CalA, is the cluster methyltransferase calH. Several additional tailoring enzymes within the cluster could be involved in the modification of the decalin polyketide product. Those include the 3 cytochrome P450 monooxygenases CalE, CalG and CalL, of which one might be responsible for the introduction of the extra hydroxyl group attached to the backbone of the decalin moiety, at position C9 in the backbone, that allows for attachment of the linear moiety. One tailoring enzyme activity that is expected to be involved in biosynthesis of calbistrin is an acyltransferase for connecting the two polyketide synthase products, and which could be performed by the cluster acyltransferase calJ. The enzyme responsible for the biosynthesis of the linear moiety, probably a second PKS, has not been identified yet. In Penicillium decumbens, this protein is Bifunctional decalin synthase calF.